Here is a 281-residue protein sequence, read N- to C-terminus: sn-glycerol-3-phosphate transport system permease protein UgpE (281 aa).

6 helical membrane passes run 14–34 (VMLI…FVAA), 85–105 (LAIT…IVYF), 113–133 (FFWM…FPTV), 142–162 (MDSY…TFLF), 188–210 (FFDM…TFIY), and 247–267 (WNQV…VVLL). The 192-residue stretch at 77–268 (LLNSFVMALA…LPPLLVVLLM (192 aa)) folds into the ABC transmembrane type-1 domain.

This sequence belongs to the binding-protein-dependent transport system permease family. UgpAE subfamily. The complex is composed of two ATP-binding proteins (UgpC), two transmembrane proteins (UgpA and UgpE) and a solute-binding protein (UgpB).

The protein resides in the cell inner membrane. Functionally, part of the ABC transporter complex UgpBAEC involved in sn-glycerol-3-phosphate (G3P) import. Probably responsible for the translocation of the substrate across the membrane. The sequence is that of sn-glycerol-3-phosphate transport system permease protein UgpE (ugpE) from Pectobacterium atrosepticum (strain SCRI 1043 / ATCC BAA-672) (Erwinia carotovora subsp. atroseptica).